Reading from the N-terminus, the 400-residue chain is MKALFFTRMFTLMVSCLMYLSIVKEDNWFGYVFIAAGAAMYAANHVLLTKETNAIWFCLIDIAIGFSFGFIFPGTGLFIIMLCPVAVAFFLRGFPKRTAWSVLCLSSILFLTVLIRTYAMFGNEFVIDHLTSMTFVVFCGVVGKLIRKLLDAQDTAKQQFQELTESHLALSAAHQELHLYAKQVEELTAIYERNRMAREIHDTVGHKMTALLVQLQLLREWQKRDSQKADETVGVCETLAREALDDVRLSVRTLQTENDPSLIESLKQLTEDFCKNAGVTTEFAVSGDPAIIPLSLHPTLIRTVQEALTNAKRHGGAAACSIQLACTTDSISLVIKDDGKGNPEAALGFGLLNMKKRAAEHGGMIRFESERDQGFTVNAEFSLANKKWSFGPVQQKESLS.

Topologically, residues 1–2 are extracellular; sequence MK. Residues 3-23 traverse the membrane as a helical segment; it reads ALFFTRMFTLMVSCLMYLSIV. Residues 24–27 are Cytoplasmic-facing; that stretch reads KEDN. The helical transmembrane segment at 28 to 48 threads the bilayer; sequence WFGYVFIAAGAAMYAANHVLL. Over 49 to 61 the chain is Extracellular; that stretch reads TKETNAIWFCLID. Residues 62–82 form a helical membrane-spanning segment; sequence IAIGFSFGFIFPGTGLFIIML. The Cytoplasmic portion of the chain corresponds to 83–101; the sequence is CPVAVAFFLRGFPKRTAWS. Residues 102 to 122 traverse the membrane as a helical segment; it reads VLCLSSILFLTVLIRTYAMFG. The Extracellular segment spans residues 123-125; sequence NEF. A helical membrane pass occupies residues 126–146; it reads VIDHLTSMTFVVFCGVVGKLI. Residues 147–400 are Cytoplasmic-facing; sequence RKLLDAQDTA…GPVQQKESLS (254 aa). The 196-residue stretch at 190-385 folds into the Histidine kinase domain; sequence IYERNRMARE…TVNAEFSLAN (196 aa). H201 is modified (phosphohistidine; by autocatalysis).

Autophosphorylated.

It localises to the cell membrane. It carries out the reaction ATP + protein L-histidine = ADP + protein N-phospho-L-histidine.. Functionally, required for resistance to linearmycins, a family of antibiotic-specialized metabolites produced by some streptomycetes. Member of the two-component regulatory system LnrJ/LnrK, which induces expression of the LnrLMN ABC transporter in response to linearmycins and other polyenes. Acts as a specific sensor for linearmycin, either directly through binding or indirectly through membrane perturbation. Probably activates LnrK by phosphorylation. May also promote biofilm formation. In Bacillus subtilis (strain 168), this protein is Sensor histidine kinase LnrJ.